The following is an 89-amino-acid chain: Small ribosomal subunit protein uS15 (89 aa).

Belongs to the universal ribosomal protein uS15 family. Part of the 30S ribosomal subunit. Forms a bridge to the 50S subunit in the 70S ribosome, contacting the 23S rRNA.

One of the primary rRNA binding proteins, it binds directly to 16S rRNA where it helps nucleate assembly of the platform of the 30S subunit by binding and bridging several RNA helices of the 16S rRNA. In terms of biological role, forms an intersubunit bridge (bridge B4) with the 23S rRNA of the 50S subunit in the ribosome. This is Small ribosomal subunit protein uS15 from Gloeobacter violaceus (strain ATCC 29082 / PCC 7421).